The following is a 375-amino-acid chain: MTPKLKLNTNSNWTKKTLGSLFELKKGEMLEKELLAPDGKYEYFNGGIKASGRTNEFNTFKNTISIIIGGSCGYVRLADKDYFCGQSSCTLTVLDPLEIDLKFAYYALKSQEEKITSLASGTTIKNIRLSDLKDLPIPLVKSIQDQRTIAHALSVFDLRIEHLNELIEVNRKLRDEYAHKLFTLDPDFLTHWNLHELHEQMGEISLGEVFHLKSGKYLKADERFEDGKFPYYGAGIESTSFVNEPNTKGDTLSMIANGYSIGNIRYHTIPWFNGTGGIAMEALKPNKTYVPFFYCALKYMQKDLKERFKRDESPFISLKLAGEIKVPFVKSFALQRKAGKIIYLLDKTLEECKEEAKSLISIRDNLLGKLFPTLS.

This sequence belongs to the type-I restriction system S methylase family. In terms of assembly, the methyltransferase is composed of M and S polypeptides.

In terms of biological role, the specificity (S) subunit of a type I methyltransferase (MTase); this subunit dictates DNA sequence specificity. The single R subunit has multiple frameshifts and is probably not expressed. The polypeptide is Putative type I specificity subunit S.MpnORF638P (Mycoplasma pneumoniae (strain ATCC 29342 / M129 / Subtype 1) (Mycoplasmoides pneumoniae)).